The sequence spans 682 residues: Zinc finger protein 16 (682 aa).

Composition is skewed to basic and acidic residues over residues 1 to 10 (MPSLRTRREE) and 113 to 125 (VSER…EGRR). Disordered stretches follow at residues 1 to 33 (MPSL…HVSD) and 112 to 134 (DVSE…SQEG). Positions 62 to 210 (YQQPDCDTRT…GVPTAESPLI (149 aa)) are necessary for transcription activation. The C2H2-type 1; degenerate zinc finger occupies 209–231 (LICNECGKTFQGNPDLIQCQIVH). Residues 237 to 259 (FMCDDCGKTFSQNSVLKNHHRSH) form a C2H2-type 2; degenerate zinc finger. Lys253 participates in a covalent cross-link: Glycyl lysine isopeptide (Lys-Gly) (interchain with G-Cter in SUMO2). C2H2-type zinc fingers lie at residues 265-287 (YQCS…QSHH), 293-315 (YMCN…QKSH), 321-343 (YECN…QRIH), 349-371 (YVCS…HRTH), 377-399 (FECG…QRVH), 405-427 (YECN…HRVH), 433-455 (YKCS…RRIH), and 461-483 (HVCN…QIIH). 2 required for nuclear localization regions span residues 268–393 (SECG…AHLR) and 341–373 (RIHS…THTG). The tract at residues 473–503 (SSVLRKHQIIHTGEKPYRCSVCGKAFSHSSA) is required for nuclear localization. Lys487 carries the post-translational modification N6-acetyllysine. 7 consecutive C2H2-type zinc fingers follow at residues 489-511 (YRCS…QGVH), 517-539 (YACH…QRVH), 545-567 (YECT…QRIH), 573-595 (HECN…QKVH), 601-623 (YTCV…QIIH), 629-651 (YKCS…QRIH), and 657-679 (YDCA…QLIH).

It belongs to the krueppel C2H2-type zinc-finger protein family. Interacts with INCA1; the interaction inhibits INCA1 activity and induces the cell cycle process.

It is found in the nucleus. In terms of biological role, acts as a transcriptional activator. Promotes cell proliferation by facilitating the cell cycle phase transition from the S to G2/M phase. Involved in both the hemin- and phorbol myristate acetate (PMA)-induced erythroid and megakaryocytic differentiation, respectively. Also plays a role as an inhibitor of cell apoptosis. In Gorilla gorilla gorilla (Western lowland gorilla), this protein is Zinc finger protein 16 (ZNF16).